We begin with the raw amino-acid sequence, 862 residues long: Kinesin-like protein KIN-7E (862 aa).

The Kinesin motor domain occupies 24–346; sequence KILVLVRLRP…LLFACCAKEV (323 aa). 110-117 contributes to the ATP binding site; the sequence is GQTSSGKT. Residues 355-428 adopt a coiled-coil conformation; it reads VMSDKALVKQ…RLEDFMKMVE (74 aa). 2 disordered regions span residues 463–505 and 542–632; these read RTSF…QSEE and ANGE…TPLV. A compositionally biased stretch (polar residues) spans 465-476; sequence SFISDGTSTPLS. The segment covering 494-505 has biased composition (basic and acidic residues); sequence MSPRHSGDQSEE. Residues 612–621 are compositionally biased toward polar residues; that stretch reads DSMTSRGSDS. Lys734 participates in a covalent cross-link: Glycyl lysine isopeptide (Lys-Gly) (interchain with G-Cter in ubiquitin).

This sequence belongs to the TRAFAC class myosin-kinesin ATPase superfamily. Kinesin family. KIN-7 subfamily.

This chain is Kinesin-like protein KIN-7E, found in Arabidopsis thaliana (Mouse-ear cress).